The sequence spans 101 residues: NADH-ubiquinone oxidoreductase chain 4L (101 aa).

The next 3 helical transmembrane spans lie at Leu5–Asn25, Ile29–Phe49, and Leu64–Tyr84.

Belongs to the complex I subunit 4L family.

It is found in the mitochondrion membrane. It catalyses the reaction a ubiquinone + NADH + 5 H(+)(in) = a ubiquinol + NAD(+) + 4 H(+)(out). In terms of biological role, core subunit of the mitochondrial membrane respiratory chain NADH dehydrogenase (Complex I) that is believed to belong to the minimal assembly required for catalysis. Complex I functions in the transfer of electrons from NADH to the respiratory chain. The immediate electron acceptor for the enzyme is believed to be ubiquinone. The chain is NADH-ubiquinone oxidoreductase chain 4L (ND4L) from Chondrus crispus (Carrageen Irish moss).